The primary structure comprises 667 residues: Long-chain-fatty-acid--CoA ligase ACSBG2 (667 aa).

Residues 227–235 (TSGTTGTPK), 418–423 (EIYGMS), aspartate 496, arginine 511, and arginine 624 each bind ATP.

It belongs to the ATP-dependent AMP-binding enzyme family. Bubblegum subfamily. Testis- and brainstem-specific. Expressed in pubertal and adult testis. Enriched in germ cells and Sertoli cells while present at a lower level in Leydig cells. Present in testicular Sertoli cells and large motoneurons in the medulla oblongata and cervical spinal cord (at protein level).

Its subcellular location is the cytoplasm. The protein resides in the membrane. It catalyses the reaction a long-chain fatty acid + ATP + CoA = a long-chain fatty acyl-CoA + AMP + diphosphate. The enzyme catalyses (5Z,8Z,11Z,14Z)-eicosatetraenoate + ATP + CoA = (5Z,8Z,11Z,14Z)-eicosatetraenoyl-CoA + AMP + diphosphate. The catalysed reaction is hexadecanoate + ATP + CoA = hexadecanoyl-CoA + AMP + diphosphate. It carries out the reaction (9Z)-octadecenoate + ATP + CoA = (9Z)-octadecenoyl-CoA + AMP + diphosphate. It catalyses the reaction (9Z,12Z)-octadecadienoate + ATP + CoA = (9Z,12Z)-octadecadienoyl-CoA + AMP + diphosphate. The enzyme catalyses tetracosanoate + ATP + CoA = tetracosanoyl-CoA + AMP + diphosphate. In terms of biological role, catalyzes the conversion of fatty acids such as long chain and very long-chain fatty acids to their active form acyl-CoAs for both synthesis of cellular lipids, and degradation via beta-oxidation. Can activate diverse saturated, monosaturated and polyunsaturated fatty acids. Has increased ability to activate oleic and linoleic acid. May play a role in spermatogenesis. The polypeptide is Long-chain-fatty-acid--CoA ligase ACSBG2 (Mus musculus (Mouse)).